A 182-amino-acid polypeptide reads, in one-letter code: MSSQIALSPAIAAAIRRPSSHDCLSASATTATATPMALKSCIVAPLSLFTSQSQIKHSSSRKTSRTTIRCDVAIKSADSINADANPSSSPSSEEEIEAEAKAKIGSRVRVTAPLKVYHVNRVPEVDLEGMEGKLKDYVAVWKGKRISANLPYKIEFFKEIEGRGLVKFVSHLKEDEFEFIDQ.

Residues 1 to 81 (MSSQIALSPA…VAIKSADSIN (81 aa)) constitute a chloroplast transit peptide.

This sequence belongs to the ferredoxin thioredoxin reductase alpha subunit family. Heterodimer of subunit A (variable subunit) and subunit B (catalytic subunit). Heterodimeric FTR forms a complex with ferredoxin and thioredoxin.

It localises to the plastid. The protein resides in the chloroplast. Its function is as follows. Variable subunit of the ferredoxin-thioredoxin reductase (FTR), which catalyzes the two-electron reduction of thioredoxins by the electrons provided by reduced ferredoxin. The protein is Ferredoxin-thioredoxin reductase subunit A1, chloroplastic of Arabidopsis thaliana (Mouse-ear cress).